A 318-amino-acid polypeptide reads, in one-letter code: uncharacterized protein (318 aa).

A run of 4 helical transmembrane segments spans residues 112–132 (VIGVLSFLFSKFVFTLVPVFL), 147–167 (IAIESLFKLILLLGYIYFLSM), 209–229 (CGSSFILFTIIVGMFVYLLVP), and 237–257 (VIDRVALIPVVLGISFEVLQL).

The protein localises to the cell membrane. This is an uncharacterized protein from Bacillus subtilis (strain 168).